A 437-amino-acid chain; its full sequence is GTPase Obg (437 aa).

Residues 2–160 (SMFLDTAKVS…RQLELELKIL (159 aa)) enclose the Obg domain. Positions 161 to 338 (ADVGLVGFPS…LLEATAELLA (178 aa)) constitute an OBG-type G domain. GTP is bound by residues 167–174 (GFPSVGKS), 192–196 (FTTIV), 214–217 (DLPG), 284–287 (NKMD), and 319–321 (SSL). Mg(2+) contacts are provided by S174 and T194. One can recognise an OCT domain in the interval 359 to 437 (GFAAEEKAFE…IGKFEFEFVD (79 aa)).

It belongs to the TRAFAC class OBG-HflX-like GTPase superfamily. OBG GTPase family. Monomer. Mg(2+) is required as a cofactor.

It localises to the cytoplasm. Functionally, an essential GTPase which binds GTP, GDP and possibly (p)ppGpp with moderate affinity, with high nucleotide exchange rates and a fairly low GTP hydrolysis rate. Plays a role in control of the cell cycle, stress response, ribosome biogenesis and in those bacteria that undergo differentiation, in morphogenesis control. This is GTPase Obg from Streptococcus equi subsp. equi (strain 4047).